An 820-amino-acid chain; its full sequence is Leucine--tRNA ligase (820 aa).

The 'HIGH' region motif lies at 40–51; that stretch reads PYPSGAGLHVGH. The short motif at 601-605 is the 'KMSKS' region element; sequence KMSKS. Lys604 provides a ligand contact to ATP.

The protein belongs to the class-I aminoacyl-tRNA synthetase family.

The protein resides in the cytoplasm. It carries out the reaction tRNA(Leu) + L-leucine + ATP = L-leucyl-tRNA(Leu) + AMP + diphosphate. The sequence is that of Leucine--tRNA ligase from Chlamydia felis (strain Fe/C-56) (Chlamydophila felis).